We begin with the raw amino-acid sequence, 155 residues long: Protein FAM162A (155 aa).

A required for proapoptotic activity region spans residues 77 to 103 (RFKKEEEIPETISFEMLDAAKNKLRVK). A helical transmembrane segment spans residues 104–121 (VSYLMIALTVAGCIYMVI).

It belongs to the UPF0389 family. In terms of assembly, interacts with HSP90AB1; HSP90AB1 is essential for FAM162A mitochondrial localization and pro-apoptotic activity. Interacts with VDAC2; the interaction is probably involved in inducing mitochondrial permeability transition.

It is found in the mitochondrion membrane. Functionally, proposed to be involved in regulation of apoptosis; the exact mechanism may differ between cell types/tissues. May be involved in hypoxia-induced cell death of transformed cells implicating cytochrome C release and caspase activation (such as CASP9) and inducing mitochondrial permeability transition. May be involved in hypoxia-induced cell death of neuronal cells probably by promoting release of AIFM1 from mitochondria to cytoplasm and its translocation to the nucleus; however, the involvement of caspases has been reported conflictingly. This is Protein FAM162A (Fam162a) from Mus musculus (Mouse).